The primary structure comprises 916 residues: Extracellular signal-regulated kinase 7 (916 aa).

A Protein kinase domain is found at 25-319 (FDVRKRMGKG…AKEAIRHPYV (295 aa)). ATP contacts are provided by residues 31 to 39 (MGKGAYGIV) and Lys54. Catalysis depends on Asp149, which acts as the Proton acceptor. Composition is skewed to polar residues over residues 364–376 (CSNRTVSNSTPSS) and 390–403 (QARTTSAKQPTTSP). 6 disordered regions span residues 364–419 (CSNR…TQSR), 452–477 (PPAAAPPAPAATAPAVPRKSGDKSVP), 588–608 (PSETEHRQQREERAYQRQMKR), 711–742 (KKLQRSKESDEKDEDDRRALPEGIGGPGSQNY), 792–813 (ELNPAPDSGGRDSGSEHSPGRD), and 883–916 (CRHRHHKPNHHAPYDHMRPTEDDIQEADSLPESN). 3 stretches are compositionally biased toward basic and acidic residues: residues 590–608 (ETEHRQQREERAYQRQMKR), 715–730 (RSKESDEKDEDDRRAL), and 800–811 (GGRDSGSEHSPG). Basic residues predominate over residues 883–892 (CRHRHHKPNH). A compositionally biased stretch (basic and acidic residues) spans 894–903 (APYDHMRPTE).

It belongs to the protein kinase superfamily. Ser/Thr protein kinase family.

The enzyme catalyses L-seryl-[protein] + ATP = O-phospho-L-seryl-[protein] + ADP + H(+). It carries out the reaction L-threonyl-[protein] + ATP = O-phospho-L-threonyl-[protein] + ADP + H(+). In terms of biological role, atypical MAPK protein that regulates protein secretion in a kinase activity-dependent manner. In response to starvation regulates protein secretion by mediating transitional endoplasmic reticulum site disassembly. Mediates inhibition of insulin-like peptide secretion upon disturbed ribosome biogenesis and acts as a downstream effector of TP53. The sequence is that of Extracellular signal-regulated kinase 7 from Drosophila melanogaster (Fruit fly).